The chain runs to 520 residues: Succinyl-CoA:3-ketoacid coenzyme A transferase 2B, mitochondrial (520 aa).

Residues 1–39 constitute a mitochondrion transit peptide; sequence MAALRLLAWALPRGVSALRPRPALPHRLIRRYVSDRSGS. Residues 280-299 form a disordered region; it reads ERLTTRDSKPAPGSKDNDPS. Catalysis depends on E342, which acts as the 5-glutamyl coenzyme A thioester intermediate.

Belongs to the 3-oxoacid CoA-transferase family. In terms of assembly, homodimer. Testis specific. Expressed in late spermatids. Accumulates during spermiogenesis. Also detected in the midpiece of spermatozoa.

Its subcellular location is the mitochondrion. It catalyses the reaction a 3-oxo acid + succinyl-CoA = a 3-oxoacyl-CoA + succinate. Its pathway is ketone metabolism; succinyl-CoA degradation; acetoacetyl-CoA from succinyl-CoA: step 1/1. In terms of biological role, key enzyme for ketone body catabolism. Transfers the CoA moiety from succinate to acetoacetate. Formation of the enzyme-CoA intermediate proceeds via an unstable anhydride species formed between the carboxylate groups of the enzyme and substrate. Probably play and important roles in the energy metabolism of spermatozoa. This chain is Succinyl-CoA:3-ketoacid coenzyme A transferase 2B, mitochondrial (Oxct2b), found in Mus musculus (Mouse).